We begin with the raw amino-acid sequence, 479 residues long: D-hydantoinase/dihydropyrimidinase (479 aa).

Zn(2+)-binding residues include histidine 59, histidine 61, and lysine 150. Lysine 150 bears the N6-carboxylysine mark. Tyrosine 155 contributes to the substrate binding site. Zn(2+)-binding residues include histidine 183 and histidine 239. Serine 289 serves as a coordination point for substrate. Aspartate 316 serves as a coordination point for Zn(2+). Asparagine 337 contacts substrate.

The protein belongs to the metallo-dependent hydrolases superfamily. Hydantoinase/dihydropyrimidinase family. In terms of assembly, homotetramer. Zn(2+) serves as cofactor. Post-translationally, carboxylation allows a single lysine to coordinate two zinc ions.

The catalysed reaction is 5,6-dihydrouracil + H2O = 3-(carbamoylamino)propanoate + H(+). Catalyzes the hydrolysis of dihydropyrimidines and of the structurally related DL-5-mono-substituted hydantoins, to produce N-carbamoyl-D-amino acids. The protein is D-hydantoinase/dihydropyrimidinase (dht) of Pseudomonas aeruginosa (strain ATCC 15692 / DSM 22644 / CIP 104116 / JCM 14847 / LMG 12228 / 1C / PRS 101 / PAO1).